The following is a 261-amino-acid chain: tRNA 5-carboxymethoxyuridine methyltransferase (261 aa).

S-adenosyl-L-methionine-binding positions include Arg-26, 52–53 (GG), Asp-73, 102–103 (AQ), and His-119.

Belongs to the class I-like SAM-binding methyltransferase superfamily. CmoM family. In terms of assembly, homodimer.

The catalysed reaction is 5-carboxymethoxyuridine(34) in tRNA + S-adenosyl-L-methionine = 5-methoxycarbonylmethoxyuridine(34) in tRNA + S-adenosyl-L-homocysteine. In terms of biological role, catalyzes the methylation of 5-carboxymethoxyuridine (cmo5U) to form 5-methoxycarbonylmethoxyuridine (mcmo5U) at position 34 in tRNAs. The protein is tRNA 5-carboxymethoxyuridine methyltransferase of Escherichia coli O157:H7.